The sequence spans 137 residues: Acidic phospholipase A2 1 (137 aa).

The first 11 residues, 1–11 (LVAVCVSLLGA), serve as a signal peptide directing secretion. A propeptide spanning residues 12-19 (ANIPPQPL) is cleaved from the precursor. 7 cysteine pairs are disulfide-bonded: Cys30–Cys89, Cys44–Cys136, Cys46–Cys62, Cys61–Cys117, Cys68–Cys110, Cys78–Cys103, and Cys96–Cys108. 3 residues coordinate Ca(2+): Tyr45, Gly47, and Gly49. Tridecanoate contacts are provided by Gly49 and His65. His65 is an active-site residue. Residue Asp66 participates in Ca(2+) binding. The active site involves Asp111.

As to quaternary structure, monomer. The cofactor is Ca(2+). As to expression, expressed by the venom gland.

The protein localises to the secreted. The catalysed reaction is a 1,2-diacyl-sn-glycero-3-phosphocholine + H2O = a 1-acyl-sn-glycero-3-phosphocholine + a fatty acid + H(+). Snake venom phospholipase A2 (PLA2) that shows anticoagulant and neurotoxic activities. PLA2 catalyzes the calcium-dependent hydrolysis of the 2-acyl groups in 3-sn-phosphoglycerides. The protein is Acidic phospholipase A2 1 of Bungarus caeruleus (Indian krait).